The chain runs to 89 residues: Phytosulfokines 1 (89 aa).

Positions 1–22 are cleaved as a signal peptide; that stretch reads MVNPGRTARALCLLCLALLLLG. Residues 23–79 constitute a propeptide that is removed on maturation; it reads QDTHSRKLLLQEKHSHGVGNGTTTTQEPSRENGGSTGSNNNGQLQFDSAKWEEFHTD. The interval 33-68 is disordered; sequence QEKHSHGVGNGTTTTQEPSRENGGSTGSNNNGQLQF. An N-linked (GlcNAc...) asparagine glycan is attached at N42. Y80 and Y82 each carry sulfotyrosine. A propeptide spanning residues 85 to 89 is cleaved from the precursor; that stretch reads DVKNP.

This sequence belongs to the phytosulfokine family. In terms of processing, sulfation is important for activity and for the binding to a putative membrane receptor. PSK-alpha is produced by endopeptidase digestion. PSK-beta is produced from PSK-alpha by exopeptidase digestion. In terms of tissue distribution, expressed throughout the seedling. More abundant in fragments containing shoot or root apexes where cells proliferate vigorously.

Its subcellular location is the secreted. Its function is as follows. Promotes plant cell differentiation, organogenesis and somatic embryogenesis as well as cell proliferation. The chain is Phytosulfokines 1 (PSK1) from Oryza sativa subsp. indica (Rice).